We begin with the raw amino-acid sequence, 1598 residues long: Pentafunctional AROM polypeptide (1598 aa).

The interval 1–384 (MGVPTKISIL…YEPRACTVSN (384 aa)) is 3-dehydroquinate synthase. Residues 44–46 (DTN), 81–84 (ESSK), 114–116 (GGV), and aspartate 119 each bind NAD(+). Arginine 130 contacts 7-phospho-2-dehydro-3-deoxy-D-arabino-heptonate. Position 139 to 140 (139 to 140 (TT)) interacts with NAD(+). Residues aspartate 146 and lysine 152 each contribute to the 7-phospho-2-dehydro-3-deoxy-D-arabino-heptonate site. Lysine 161 serves as a coordination point for NAD(+). Asparagine 162 contributes to the 7-phospho-2-dehydro-3-deoxy-D-arabino-heptonate binding site. Residues 179–182 (FLNT) and asparagine 190 contribute to the NAD(+) site. Glutamate 194 contacts Zn(2+). 7-phospho-2-dehydro-3-deoxy-D-arabino-heptonate is bound by residues 194 to 197 (EVIK) and lysine 250. Residue glutamate 260 is the Proton acceptor; for 3-dehydroquinate synthase activity of the active site. Residues 264 to 268 (RNLLN) and histidine 271 contribute to the 7-phospho-2-dehydro-3-deoxy-D-arabino-heptonate site. Residue histidine 271 coordinates Zn(2+). Histidine 275 acts as the Proton acceptor; for 3-dehydroquinate synthase activity in catalysis. 7-phospho-2-dehydro-3-deoxy-D-arabino-heptonate-binding residues include histidine 287 and lysine 356. Histidine 287 lines the Zn(2+) pocket. The segment at 397–842 (VYPGFPKSLN…WDTLAQTFKV (446 aa)) is EPSP synthase. Cysteine 824 (for EPSP synthase activity) is an active-site residue. The tract at residues 867 to 1059 (AASIFIIGMR…RRKENTFFVS (193 aa)) is shikimate kinase. 874–881 (GMRGAGKT) lines the ATP pocket. The 3-dehydroquinase stretch occupies residues 1060 to 1280 (LTFPDLTPAS…AAPGQLSARE (221 aa)). The active-site Proton acceptor; for 3-dehydroquinate dehydratase activity is the histidine 1183. The Schiff-base intermediate with substrate; for 3-dehydroquinate dehydratase activity role is filled by lysine 1211. The tract at residues 1293–1598 (AKKFAVIGKP…GVSSSDDIIS (306 aa)) is shikimate dehydrogenase.

The protein in the N-terminal section; belongs to the sugar phosphate cyclases superfamily. Dehydroquinate synthase family. In the 2nd section; belongs to the EPSP synthase family. This sequence in the 3rd section; belongs to the shikimate kinase family. It in the 4th section; belongs to the type-I 3-dehydroquinase family. The protein in the C-terminal section; belongs to the shikimate dehydrogenase family. As to quaternary structure, homodimer. The cofactor is Zn(2+).

It localises to the cytoplasm. The enzyme catalyses 7-phospho-2-dehydro-3-deoxy-D-arabino-heptonate = 3-dehydroquinate + phosphate. It carries out the reaction 3-dehydroquinate = 3-dehydroshikimate + H2O. It catalyses the reaction shikimate + NADP(+) = 3-dehydroshikimate + NADPH + H(+). The catalysed reaction is shikimate + ATP = 3-phosphoshikimate + ADP + H(+). The enzyme catalyses 3-phosphoshikimate + phosphoenolpyruvate = 5-O-(1-carboxyvinyl)-3-phosphoshikimate + phosphate. It participates in metabolic intermediate biosynthesis; chorismate biosynthesis; chorismate from D-erythrose 4-phosphate and phosphoenolpyruvate: step 2/7. Its pathway is metabolic intermediate biosynthesis; chorismate biosynthesis; chorismate from D-erythrose 4-phosphate and phosphoenolpyruvate: step 3/7. The protein operates within metabolic intermediate biosynthesis; chorismate biosynthesis; chorismate from D-erythrose 4-phosphate and phosphoenolpyruvate: step 4/7. It functions in the pathway metabolic intermediate biosynthesis; chorismate biosynthesis; chorismate from D-erythrose 4-phosphate and phosphoenolpyruvate: step 5/7. It participates in metabolic intermediate biosynthesis; chorismate biosynthesis; chorismate from D-erythrose 4-phosphate and phosphoenolpyruvate: step 6/7. In terms of biological role, the AROM polypeptide catalyzes 5 consecutive enzymatic reactions in prechorismate polyaromatic amino acid biosynthesis. The polypeptide is Pentafunctional AROM polypeptide (Paracoccidioides lutzii (strain ATCC MYA-826 / Pb01) (Paracoccidioides brasiliensis)).